The sequence spans 408 residues: Acetylornithine/succinyldiaminopimelate aminotransferase (408 aa).

Pyridoxal 5'-phosphate is bound by residues 108-109 and phenylalanine 141; that span reads GA. Position 144 (arginine 144) interacts with N(2)-acetyl-L-ornithine. 226–229 serves as a coordination point for pyridoxal 5'-phosphate; sequence DEIQ. The residue at position 255 (lysine 255) is an N6-(pyridoxal phosphate)lysine. Threonine 283 is a N(2)-acetyl-L-ornithine binding site. Threonine 284 is a binding site for pyridoxal 5'-phosphate.

This sequence belongs to the class-III pyridoxal-phosphate-dependent aminotransferase family. ArgD subfamily. In terms of assembly, homodimer. It depends on pyridoxal 5'-phosphate as a cofactor.

It localises to the cytoplasm. The catalysed reaction is N(2)-acetyl-L-ornithine + 2-oxoglutarate = N-acetyl-L-glutamate 5-semialdehyde + L-glutamate. It carries out the reaction N-succinyl-(2S,6S)-2,6-diaminopimelate + 2-oxoglutarate = (S)-2-succinylamino-6-oxoheptanedioate + L-glutamate. It participates in amino-acid biosynthesis; L-arginine biosynthesis; N(2)-acetyl-L-ornithine from L-glutamate: step 4/4. The protein operates within amino-acid biosynthesis; L-lysine biosynthesis via DAP pathway; LL-2,6-diaminopimelate from (S)-tetrahydrodipicolinate (succinylase route): step 2/3. Involved in both the arginine and lysine biosynthetic pathways. In Buchnera aphidicola subsp. Acyrthosiphon pisum (strain APS) (Acyrthosiphon pisum symbiotic bacterium), this protein is Acetylornithine/succinyldiaminopimelate aminotransferase.